A 248-amino-acid polypeptide reads, in one-letter code: 2,3-bisphosphoglycerate-dependent phosphoglycerate mutase (248 aa).

Residues 8-15 (RHGESTWN), 21-22 (TG), Arg-60, 87-90 (ERHY), Lys-98, and 114-115 (RR) contribute to the substrate site. The Tele-phosphohistidine intermediate role is filled by His-9. The active-site Proton donor/acceptor is Glu-87. The interval 118 to 137 (DTPPPALEPTDPRASYDDPR) is disordered. The segment covering 127 to 137 (TDPRASYDDPR) has biased composition (basic and acidic residues). 183 to 184 (GN) provides a ligand contact to substrate.

It belongs to the phosphoglycerate mutase family. BPG-dependent PGAM subfamily. As to quaternary structure, homodimer.

The enzyme catalyses (2R)-2-phosphoglycerate = (2R)-3-phosphoglycerate. Its pathway is carbohydrate degradation; glycolysis; pyruvate from D-glyceraldehyde 3-phosphate: step 3/5. Its function is as follows. Catalyzes the interconversion of 2-phosphoglycerate and 3-phosphoglycerate. This chain is 2,3-bisphosphoglycerate-dependent phosphoglycerate mutase, found in Cupriavidus necator (strain ATCC 17699 / DSM 428 / KCTC 22496 / NCIMB 10442 / H16 / Stanier 337) (Ralstonia eutropha).